A 798-amino-acid chain; its full sequence is Protocadherin beta-10 (798 aa).

The N-terminal stretch at 1–26 (MAVRELCFSRQRQVLFLFLFWGVSLA) is a signal peptide. At 27 to 690 (GSGFGRYSVT…AQADLLTVYL (664 aa)) the chain is on the extracellular side. Cadherin domains lie at 35–133 (VTEE…APVF), 138–242 (TVLK…APQF), 247–347 (YETQ…PPEL), 352–451 (FSNS…APAF), and 456–561 (YTLF…SPFV). The N-linked (GlcNAc...) asparagine glycan is linked to Asn169. 2 N-linked (GlcNAc...) asparagine glycosylation sites follow: Asn418 and Asn436. The N-linked (GlcNAc...) asparagine glycan is linked to Asn567. Residues 568 to 671 (GSAPCTELVP…LVDGFSQPYL (104 aa)) form the Cadherin 6 domain. Residues 691-711 (VVALASVSSLFLFSVLLFVAV) traverse the membrane as a helical segment. The Cytoplasmic portion of the chain corresponds to 712–798 (RLCRRSRAAS…FRNSFGFNIQ (87 aa)).

It localises to the cell membrane. Potential calcium-dependent cell-adhesion protein. May be involved in the establishment and maintenance of specific neuronal connections in the brain. The protein is Protocadherin beta-10 (PCDHB10) of Pan troglodytes (Chimpanzee).